A 1046-amino-acid polypeptide reads, in one-letter code: Suppressor of Mek1 (1046 aa).

A WH1 domain is found at Met-1–Tyr-101. Residues Phe-626 to Val-1046 are disordered. The span at Ile-665–Leu-689 shows a compositional bias: acidic residues. Over residues Asn-695–Asn-713 the composition is skewed to low complexity. A compositionally biased stretch (basic and acidic residues) spans Asn-714 to Glu-727. The segment covering Tyr-743–Glu-752 has biased composition (acidic residues). Over residues Ile-753 to Asn-783 the composition is skewed to basic and acidic residues. The segment covering Asp-784 to Ser-803 has biased composition (acidic residues). A compositionally biased stretch (low complexity) spans Asp-804–Asn-820. Composition is skewed to basic and acidic residues over residues Val-826–Leu-855 and Glu-862–Asn-876. Residues Ser-889–Asn-905 show a composition bias toward low complexity. Over residues Gly-909–Lys-935 the composition is skewed to basic and acidic residues. A compositionally biased stretch (low complexity) spans Asn-958–Asn-995. The segment covering Asp-996–Leu-1011 has biased composition (acidic residues). Positions Ala-1003 to Arg-1022 match the Nuclear localization signal motif. Residues Asn-1028–Ser-1038 are compositionally biased toward low complexity.

The protein belongs to the SMEK family. As to quaternary structure, interacts with ppp4c.

Its subcellular location is the cytoplasm. The protein localises to the cell cortex. The protein resides in the nucleus. In terms of biological role, suppresses MEK1 null cell polarity, chemotaxis, and gene expression defects. Required for proper cytokinesis during vegetative growth, timely exit from the mound stage during development, and myosin II assembly. May be a regulatory subunit of serine/threonine-protein phosphatase 4 (PP4) and may control localization of PP4 to the nucleus. Involved in the regulation of some ppp4c functions, such as developmental progression, chemotaxis, expression of stress response genes and cell movement. The polypeptide is Suppressor of Mek1 (smkA) (Dictyostelium discoideum (Social amoeba)).